Here is a 60-residue protein sequence, read N- to C-terminus: Mastoparan-VT1 (60 aa).

The N-terminal stretch at 1 to 25 is a signal peptide; sequence MKNTILILFTAFIALLGFFGMSAEA. Residues 26–45 constitute a propeptide that is removed on maturation; sequence LADLKADPLAGPNPDADPEA. 3 AXPX repeats span residues 31-34, 35-38, and 41-44; these read ADPL, AGPN, and ADPE. At Leu-59 the chain carries Leucine amide.

This sequence belongs to the MCD family. Mastoparan subfamily. As to expression, expressed by the venom gland.

It localises to the secreted. Antimicrobial peptide with activities against Gram-negative and Gram-positive bacteria and the fungi C.albicans and C.parapsilosis. Exhibits little hemolytic activity against washed human erythrocytes. Also acts as a mast cell degranulating peptide. Its mast cell degranulation activity may be related to the activation of G-protein coupled receptors in mast cells as well as interaction with other proteins located in cell endosomal membranes in the mast cells. In terms of biological role, antimicrobial peptide with activities against Gram-negative and Gram-positive bacteria and the fungi C.albicans and C.parapsilosis. Exhibits little hemolytic activity against washed human erythrocytes. Also acts as a mast cell degranulating peptide. This chain is Mastoparan-VT1, found in Vespa tropica (Greater banded hornet).